A 526-amino-acid polypeptide reads, in one-letter code: Importin subunit alpha-1a (526 aa).

The IBB domain occupies 1–58; that stretch reads MSLRPSERVEVRRNRYKVAVDAEEGRRRREDNMVEIRKSRREESLLKKRREGLQAQAP. ARM repeat units follow at residues 105–145, 148–187, 190–230, 232–271, 274–313, 316–356, 359–398, and 402–441; these read SPPI…NIAS, SENT…NVAG, PKCR…NFCR, KPQP…YLSD, NDKI…NIVT, DAQT…NITA, KDQI…NATS, and HDQI…NILK.

Belongs to the importin alpha family. In terms of assembly, forms a complex with importin subunit beta-1. The whole complex, most stable and composed of importin alpha, importin beta and NLS substrate, is referred to as PTAC or pore targeting complex. Interacts with mungbean yellow mosaic virus capsid protein. Highly expressed in callus, followed by root and etiolated leaf. Low expression in green leaf.

It is found in the cytoplasm. The protein localises to the perinuclear region. In terms of biological role, functions in nuclear protein import. Binds specifically and directly to substrates containing either a simple or bipartite NLS motif. Promotes docking of import substrates to the nuclear envelope. In Oryza sativa subsp. japonica (Rice), this protein is Importin subunit alpha-1a.